A 315-amino-acid chain; its full sequence is 4-hydroxy-3-methylbut-2-enyl diphosphate reductase (315 aa).

Cys-12 contributes to the [4Fe-4S] cluster binding site. His-41 and His-74 together coordinate (2E)-4-hydroxy-3-methylbut-2-enyl diphosphate. Positions 41 and 74 each coordinate dimethylallyl diphosphate. Isopentenyl diphosphate-binding residues include His-41 and His-74. Cys-96 lines the [4Fe-4S] cluster pocket. His-124 contributes to the (2E)-4-hydroxy-3-methylbut-2-enyl diphosphate binding site. His-124 contacts dimethylallyl diphosphate. His-124 is an isopentenyl diphosphate binding site. Glu-126 functions as the Proton donor in the catalytic mechanism. Thr-168 is a (2E)-4-hydroxy-3-methylbut-2-enyl diphosphate binding site. [4Fe-4S] cluster is bound at residue Cys-198. 4 residues coordinate (2E)-4-hydroxy-3-methylbut-2-enyl diphosphate: Ser-226, Ser-227, Asn-228, and Ser-270. Residues Ser-226, Ser-227, Asn-228, and Ser-270 each coordinate dimethylallyl diphosphate. 4 residues coordinate isopentenyl diphosphate: Ser-226, Ser-227, Asn-228, and Ser-270.

The protein belongs to the IspH family. It depends on [4Fe-4S] cluster as a cofactor.

It carries out the reaction isopentenyl diphosphate + 2 oxidized [2Fe-2S]-[ferredoxin] + H2O = (2E)-4-hydroxy-3-methylbut-2-enyl diphosphate + 2 reduced [2Fe-2S]-[ferredoxin] + 2 H(+). The enzyme catalyses dimethylallyl diphosphate + 2 oxidized [2Fe-2S]-[ferredoxin] + H2O = (2E)-4-hydroxy-3-methylbut-2-enyl diphosphate + 2 reduced [2Fe-2S]-[ferredoxin] + 2 H(+). Its pathway is isoprenoid biosynthesis; dimethylallyl diphosphate biosynthesis; dimethylallyl diphosphate from (2E)-4-hydroxy-3-methylbutenyl diphosphate: step 1/1. It functions in the pathway isoprenoid biosynthesis; isopentenyl diphosphate biosynthesis via DXP pathway; isopentenyl diphosphate from 1-deoxy-D-xylulose 5-phosphate: step 6/6. Functionally, catalyzes the conversion of 1-hydroxy-2-methyl-2-(E)-butenyl 4-diphosphate (HMBPP) into a mixture of isopentenyl diphosphate (IPP) and dimethylallyl diphosphate (DMAPP). Acts in the terminal step of the DOXP/MEP pathway for isoprenoid precursor biosynthesis. The protein is 4-hydroxy-3-methylbut-2-enyl diphosphate reductase of Pseudomonas putida (strain W619).